Reading from the N-terminus, the 243-residue chain is 3-deoxy-manno-octulosonate cytidylyltransferase (243 aa).

The protein belongs to the KdsB family.

Its subcellular location is the cytoplasm. It carries out the reaction 3-deoxy-alpha-D-manno-oct-2-ulosonate + CTP = CMP-3-deoxy-beta-D-manno-octulosonate + diphosphate. The protein operates within nucleotide-sugar biosynthesis; CMP-3-deoxy-D-manno-octulosonate biosynthesis; CMP-3-deoxy-D-manno-octulosonate from 3-deoxy-D-manno-octulosonate and CTP: step 1/1. It participates in bacterial outer membrane biogenesis; lipopolysaccharide biosynthesis. Its function is as follows. Activates KDO (a required 8-carbon sugar) for incorporation into bacterial lipopolysaccharide in Gram-negative bacteria. This chain is 3-deoxy-manno-octulosonate cytidylyltransferase, found in Helicobacter pylori (strain HPAG1).